Reading from the N-terminus, the 454-residue chain is uncharacterized protein (454 aa).

In terms of domain architecture, TRAM spans 1–45 (MAAEGKAIAKVNDLVIFVPYVVPGDVVDLQIKRKKNKYAEAEAVK). Positions 58, 64, 67, and 160 each coordinate [4Fe-4S] cluster. Residues Gln286, Tyr315, Glu336, and Asp385 each contribute to the S-adenosyl-L-methionine site. The active-site Nucleophile is the Cys412.

The protein belongs to the class I-like SAM-binding methyltransferase superfamily. RNA M5U methyltransferase family.

This is an uncharacterized protein from Bacteroides thetaiotaomicron (strain ATCC 29148 / DSM 2079 / JCM 5827 / CCUG 10774 / NCTC 10582 / VPI-5482 / E50).